A 305-amino-acid chain; its full sequence is Olfactory receptor 4F17 (305 aa).

Residues 1-18 lie on the Extracellular side of the membrane; that stretch reads MVTEFIFLGLSDSQGLQT. The chain crosses the membrane as a helical span at residues 19 to 42; it reads FLFMLFFVFYGGIVFGNLLIVITV. Residues 43 to 50 are Cytoplasmic-facing; it reads VSDSHLHS. Residues 51–72 traverse the membrane as a helical segment; sequence PMYFLLANLSLIDLSLSSVTAP. Residues 73 to 93 are Extracellular-facing; the sequence is KMITDFFSQRKVISFKGCLVQ. Cysteine 90 and cysteine 182 are joined by a disulfide. A helical transmembrane segment spans residues 94 to 113; sequence IFLLHFFGGSEMVILIAMGF. Over 114-132 the chain is Cytoplasmic; it reads DRYIAICKPLHYTTIMCGN. The helical transmembrane segment at 133–151 threads the bilayer; sequence ACVGIMAVAWGIGFLHSVS. The Extracellular portion of the chain corresponds to 152 to 188; that stretch reads QLAFAVHLPFCGPNEVDSFYCDLPRVIKLACTDTYRL. A helical transmembrane segment spans residues 189-212; sequence DIMVIANSGVLTVCSFVLLIISYT. At 213–228 the chain is on the cytoplasmic side; sequence IILMTIQHRPLDKSSK. The chain crosses the membrane as a helical span at residues 229 to 251; the sequence is ALSTLTAHITVVLLFFGPCVFIY. Over 252–262 the chain is Extracellular; sequence AWPFPIKSLDK. A helical membrane pass occupies residues 263 to 282; the sequence is FLAVFYSVITPLLNPIIYTL. The Cytoplasmic segment spans residues 283–305; that stretch reads RNKDMKTAIRQLRKWDAHSSVKF.

Belongs to the G-protein coupled receptor 1 family.

The protein localises to the cell membrane. Functionally, odorant receptor. The protein is Olfactory receptor 4F17 (OR4F17) of Homo sapiens (Human).